A 259-amino-acid polypeptide reads, in one-letter code: Deoxyribose-phosphate aldolase (259 aa).

The Proton donor/acceptor role is filled by Asp102. The active-site Schiff-base intermediate with acetaldehyde is the Lys167. The active-site Proton donor/acceptor is the Lys201.

The protein belongs to the DeoC/FbaB aldolase family. DeoC type 2 subfamily.

Its subcellular location is the cytoplasm. It carries out the reaction 2-deoxy-D-ribose 5-phosphate = D-glyceraldehyde 3-phosphate + acetaldehyde. It functions in the pathway carbohydrate degradation; 2-deoxy-D-ribose 1-phosphate degradation; D-glyceraldehyde 3-phosphate and acetaldehyde from 2-deoxy-alpha-D-ribose 1-phosphate: step 2/2. Catalyzes a reversible aldol reaction between acetaldehyde and D-glyceraldehyde 3-phosphate to generate 2-deoxy-D-ribose 5-phosphate. The protein is Deoxyribose-phosphate aldolase of Salmonella dublin (strain CT_02021853).